The primary structure comprises 230 residues: Heptaprenylglyceryl phosphate synthase (230 aa).

Lys-12 provides a ligand contact to sn-glycerol 1-phosphate. Residues Asp-14 and Thr-40 each contribute to the Mg(2+) site. Sn-glycerol 1-phosphate is bound by residues 159–164 (YIEYSG), Gly-189, and 209–210 (GD).

It belongs to the GGGP/HepGP synthase family. Group I subfamily. In terms of assembly, homodimer. Mg(2+) serves as cofactor.

It catalyses the reaction sn-glycerol 1-phosphate + all-trans-heptaprenyl diphosphate = 3-heptaprenyl-sn-glycero-1-phosphate + diphosphate. It participates in membrane lipid metabolism; glycerophospholipid metabolism. Functionally, prenyltransferase that catalyzes in vivo the transfer of the heptaprenyl moiety of heptaprenyl pyrophosphate (HepPP; 35 carbon atoms) to the C3 hydroxyl of sn-glycerol-1-phosphate (G1P), producing heptaprenylglyceryl phosphate (HepGP). This reaction is an ether-bond-formation step in the biosynthesis of archaea-type G1P-based membrane lipids found in Bacillales. The sequence is that of Heptaprenylglyceryl phosphate synthase from Staphylococcus aureus (strain Mu3 / ATCC 700698).